The sequence spans 147 residues: Small ribosomal subunit protein uS12 (147 aa).

Belongs to the universal ribosomal protein uS12 family. In terms of assembly, part of the 30S ribosomal subunit.

Its function is as follows. With S4 and S5 plays an important role in translational accuracy. Located at the interface of the 30S and 50S subunits. This is Small ribosomal subunit protein uS12 from Methanococcus maripaludis (strain C5 / ATCC BAA-1333).